Reading from the N-terminus, the 353-residue chain is MTIALGKFTKEENDLFDIMDDWLRRDRFVFVGWSGLLLFPCAYFALGGWFTGTTFVTSWYTHGLASSYLEGCNFLTAAVSTPANSLAHSLLLLWGPEAQGDLTRWCQLGGLWTFVALHGAFGLIGFMLRQFELARSVQLRPYNAIAFSGPIAVFVSVFLIYPLGQSGWFFAPSFGVAAIFRFILFFQGFHNWTLNPFHMMGVAGVLGAALLCAIHGATVENTLFEDGDGANTFRAFNPTQAEETYSMVTANRFWSQIFGVAFSNKRWLHFFMLFVPVTGLWMSALGVVGLALNLRAYDFVSQEIRAAEDPEFETFYTKNILLNEGIRAWMAAQDQPHENLIFPEEVLPRGNAL.

Thr2 bears the N-acetylthreonine mark. Thr2 carries the phosphothreonine modification. A helical membrane pass occupies residues 41–61; the sequence is CAYFALGGWFTGTTFVTSWYT. His118 contacts chlorophyll a. A helical transmembrane segment spans residues 125-141; it reads GFMLRQFELARSVQLRP. Pheophytin a-binding residues include Gln130 and Asn143. The helical transmembrane segment at 153–166 threads the bilayer; sequence VFVSVFLIYPLGQS. His198 lines the chlorophyll a pocket. The helical transmembrane segment at 208-228 threads the bilayer; that stretch reads AALLCAIHGATVENTLFEDGD. His215 and Phe262 together coordinate a plastoquinone. His215 lines the Fe cation pocket. Position 269 (His269) interacts with Fe cation. Residues 279–295 traverse the membrane as a helical segment; the sequence is GLWMSALGVVGLALNLR.

It belongs to the reaction center PufL/M/PsbA/D family. In terms of assembly, PSII is composed of 1 copy each of membrane proteins PsbA, PsbB, PsbC, PsbD, PsbE, PsbF, PsbH, PsbI, PsbJ, PsbK, PsbL, PsbM, PsbT, PsbX, PsbY, PsbZ, Psb30/Ycf12, at least 3 peripheral proteins of the oxygen-evolving complex and a large number of cofactors. It forms dimeric complexes. The D1/D2 heterodimer binds P680, chlorophylls that are the primary electron donor of PSII, and subsequent electron acceptors. It shares a non-heme iron and each subunit binds pheophytin, quinone, additional chlorophylls, carotenoids and lipids. There is also a Cl(-1) ion associated with D1 and D2, which is required for oxygen evolution. The PSII complex binds additional chlorophylls, carotenoids and specific lipids. serves as cofactor.

The protein resides in the plastid. It localises to the chloroplast thylakoid membrane. The enzyme catalyses 2 a plastoquinone + 4 hnu + 2 H2O = 2 a plastoquinol + O2. Its function is as follows. Photosystem II (PSII) is a light-driven water:plastoquinone oxidoreductase that uses light energy to abstract electrons from H(2)O, generating O(2) and a proton gradient subsequently used for ATP formation. It consists of a core antenna complex that captures photons, and an electron transfer chain that converts photonic excitation into a charge separation. The D1/D2 (PsbA/PsbD) reaction center heterodimer binds P680, the primary electron donor of PSII as well as several subsequent electron acceptors. D2 is needed for assembly of a stable PSII complex. The polypeptide is Photosystem II D2 protein (Pelargonium hortorum (Common geranium)).